The primary structure comprises 2327 residues: Pre-mRNA-processing-splicing factor 8 homolog (2327 aa).

A compositionally biased stretch (polar residues) spans 1–14 (MDDTNSNINQSNES). A disordered region spans residues 1–20 (MDDTNSNINQSNESQHLEEK). Positions 801–1292 (TTVHWLEKRR…KIQTRVKIGL (492 aa)) are reverse transcriptase homology domain. Residues 1293 to 1566 (NSKMPNRFPP…TLKISLIQIF (274 aa)) are linker. An important for branch point selection region spans residues 1502 to 1515 (MKYKKLTHAQRSGL). Residues 1570–1740 (LWQKIHESLV…LRERIRKGLQ (171 aa)) are restriction endonuclease homology domain. The involved in interaction with pre-mRNA 5' splice site stretch occupies residues 1657–2023 (GDFDSHDIER…QIAEIEKQKT (367 aa)). An RNase H homology domain region spans residues 1755 to 2008 (NFGELFSNKI…ILGMEISAPS (254 aa)). The MPN domain occupies 2093-2223 (TYVFPKNILK…LTAYHLTPSG (131 aa)).

As to quaternary structure, part of the U5 snRNP complex and of the U4/U6-U5 tri-snRNP complex.

It localises to the nucleus speckle. Functions as a scaffold that mediates the ordered assembly of spliceosomal proteins and snRNAs. Required for the assembly of the U4/U6-U5 tri-snRNP complex. Functions as a scaffold that positions spliceosomal U2, U5 and U6 snRNAs at splice sites on pre-mRNA substrates, so that splicing can occur. Interacts with both the 5' and the 3' splice site. The polypeptide is Pre-mRNA-processing-splicing factor 8 homolog (prpf8) (Dictyostelium discoideum (Social amoeba)).